A 654-amino-acid chain; its full sequence is tRNA 5-methylaminomethyl-2-thiouridine biosynthesis bifunctional protein MnmC (654 aa).

The tract at residues 1–236 is tRNA (mnm(5)s(2)U34)-methyltransferase; the sequence is MSTLLQHAQI…KWEVMHGVYT (236 aa). An FAD-dependent cmnm(5)s(2)U34 oxidoreductase region spans residues 262–654; the sequence is IGAGLAGSAT…FALRRLIRGK (393 aa).

The protein in the N-terminal section; belongs to the methyltransferase superfamily. tRNA (mnm(5)s(2)U34)-methyltransferase family. In the C-terminal section; belongs to the DAO family. FAD serves as cofactor.

It localises to the cytoplasm. The catalysed reaction is 5-aminomethyl-2-thiouridine(34) in tRNA + S-adenosyl-L-methionine = 5-methylaminomethyl-2-thiouridine(34) in tRNA + S-adenosyl-L-homocysteine + H(+). In terms of biological role, catalyzes the last two steps in the biosynthesis of 5-methylaminomethyl-2-thiouridine (mnm(5)s(2)U) at the wobble position (U34) in tRNA. Catalyzes the FAD-dependent demodification of cmnm(5)s(2)U34 to nm(5)s(2)U34, followed by the transfer of a methyl group from S-adenosyl-L-methionine to nm(5)s(2)U34, to form mnm(5)s(2)U34. This chain is tRNA 5-methylaminomethyl-2-thiouridine biosynthesis bifunctional protein MnmC, found in Pseudomonas entomophila (strain L48).